Here is a 1167-residue protein sequence, read N- to C-terminus: DNA-directed RNA polymerase subunit beta (1167 aa).

The tract at residues 1–27 (MAVSPANQATAATTSAESRSEATGIPG) is disordered. Residues 9 to 23 (ATAATTSAESRSEAT) show a composition bias toward low complexity.

This sequence belongs to the RNA polymerase beta chain family. In terms of assembly, the RNAP catalytic core consists of 2 alpha, 1 beta, 1 beta' and 1 omega subunit. When a sigma factor is associated with the core the holoenzyme is formed, which can initiate transcription.

It carries out the reaction RNA(n) + a ribonucleoside 5'-triphosphate = RNA(n+1) + diphosphate. Its function is as follows. DNA-dependent RNA polymerase catalyzes the transcription of DNA into RNA using the four ribonucleoside triphosphates as substrates. This chain is DNA-directed RNA polymerase subunit beta, found in Amycolatopsis mediterranei (strain S699) (Nocardia mediterranei).